Consider the following 328-residue polypeptide: Biotin synthase (328 aa).

A Radical SAM core domain is found at 51–282 (FNGNHVDLCS…DKIIRYAGGR (232 aa)). C69, C73, and C76 together coordinate [4Fe-4S] cluster. Residues C112, C147, C207, and R277 each coordinate [2Fe-2S] cluster.

Belongs to the radical SAM superfamily. Biotin synthase family. Homodimer. Requires [4Fe-4S] cluster as cofactor. The cofactor is [2Fe-2S] cluster.

The enzyme catalyses (4R,5S)-dethiobiotin + (sulfur carrier)-SH + 2 reduced [2Fe-2S]-[ferredoxin] + 2 S-adenosyl-L-methionine = (sulfur carrier)-H + biotin + 2 5'-deoxyadenosine + 2 L-methionine + 2 oxidized [2Fe-2S]-[ferredoxin]. Its pathway is cofactor biosynthesis; biotin biosynthesis; biotin from 7,8-diaminononanoate: step 2/2. Functionally, catalyzes the conversion of dethiobiotin (DTB) to biotin by the insertion of a sulfur atom into dethiobiotin via a radical-based mechanism. This is Biotin synthase from Clostridium acetobutylicum (strain ATCC 824 / DSM 792 / JCM 1419 / IAM 19013 / LMG 5710 / NBRC 13948 / NRRL B-527 / VKM B-1787 / 2291 / W).